A 567-amino-acid chain; its full sequence is Urease subunit alpha (567 aa).

The Urease domain maps to 129–567 (GGVDTHIHFI…LPMAQRYFLF (439 aa)). His-134, His-136, and Lys-217 together coordinate Ni(2+). Lys-217 carries the post-translational modification N6-carboxylysine. His-219 is a binding site for substrate. Residues His-246 and His-272 each contribute to the Ni(2+) site. The active-site Proton donor is His-320. Asp-360 lines the Ni(2+) pocket.

The protein belongs to the metallo-dependent hydrolases superfamily. Urease alpha subunit family. In terms of assembly, heterotrimer of UreA (gamma), UreB (beta) and UreC (alpha) subunits. Three heterotrimers associate to form the active enzyme. Ni cation is required as a cofactor. Post-translationally, carboxylation allows a single lysine to coordinate two nickel ions.

It localises to the cytoplasm. The catalysed reaction is urea + 2 H2O + H(+) = hydrogencarbonate + 2 NH4(+). It participates in nitrogen metabolism; urea degradation; CO(2) and NH(3) from urea (urease route): step 1/1. In Aliivibrio fischeri (strain MJ11) (Vibrio fischeri), this protein is Urease subunit alpha.